The chain runs to 234 residues: TRGGYLNKFTTVVASIIGVSSLYKVPTKPTTLSPPFISPKPGFMSLPPRKHEVVGGASSSLVAAAVSARNSVISEDLFEGLALFDKASSLEDDGGDNVSEFQASIDDVNDGGGGGGDDELAVSRLGLPQKLVETLEKRGITKLFPIQRAVLVPALEGRDIIGRAKTGTGKTLAFAIPIIKRLTEEDEDNRNSLAGRLPRVLVLAPTRELAKQVETEIKEPAPYLRTVCVYGGVS.

Positions L120–R148 match the Q motif motif. One can recognise a Helicase ATP-binding domain in the interval L151–S234. A164–T171 contacts ATP.

The protein belongs to the DEAD box helicase family. DDX21/DDX50 subfamily.

This is DEAD-box ATP-dependent RNA helicase 3 from Helianthus annuus (Common sunflower).